We begin with the raw amino-acid sequence, 364 residues long: Fructose-bisphosphate aldolase C (364 aa).

Tyr-5 is subject to Phosphotyrosine. A phosphoserine mark is found at Ser-36, Ser-39, and Ser-45. Arg-56 contacts substrate. The residue at position 111 (Lys-111) is an N6-acetyllysine. A Phosphoserine modification is found at Ser-132. Lys-147 serves as a coordination point for substrate. The Proton acceptor role is filled by Glu-188. Catalysis depends on Lys-230, which acts as the Schiff-base intermediate with dihydroxyacetone-P.

The protein belongs to the class I fructose-bisphosphate aldolase family. In terms of assembly, homotetramer. Interacts with ATP6V1E1.

It catalyses the reaction beta-D-fructose 1,6-bisphosphate = D-glyceraldehyde 3-phosphate + dihydroxyacetone phosphate. The protein operates within carbohydrate degradation; glycolysis; D-glyceraldehyde 3-phosphate and glycerone phosphate from D-glucose: step 4/4. This chain is Fructose-bisphosphate aldolase C (ALDOC), found in Pan troglodytes (Chimpanzee).